The primary structure comprises 258 residues: Ribosomal RNA small subunit methyltransferase J (258 aa).

Residues 123 to 124 (ER) and D177 contribute to the S-adenosyl-L-methionine site. A disordered region spans residues 232 to 258 (IDGPKPSHSLEGKSSRYDIYPKKALKA). Positions 239-252 (HSLEGKSSRYDIYP) are enriched in basic and acidic residues.

It belongs to the methyltransferase superfamily. RsmJ family.

It localises to the cytoplasm. The catalysed reaction is guanosine(1516) in 16S rRNA + S-adenosyl-L-methionine = N(2)-methylguanosine(1516) in 16S rRNA + S-adenosyl-L-homocysteine + H(+). Functionally, specifically methylates the guanosine in position 1516 of 16S rRNA. This Pseudomonas putida (strain ATCC 47054 / DSM 6125 / CFBP 8728 / NCIMB 11950 / KT2440) protein is Ribosomal RNA small subunit methyltransferase J.